A 274-amino-acid polypeptide reads, in one-letter code: Cytochrome b-c1 complex subunit Rieske, mitochondrial (274 aa).

Residues 79–103 (SHTDVKVPDFSEYRRLEVLDSTKSS) are Mitochondrial matrix-facing. The helical transmembrane segment at 104 to 140 (RESSEARKGFSYLVTGVTTVGVAYAAKNAVTQFVSSM) threads the bilayer. The Mitochondrial intermembrane segment spans residues 141–274 (SASADVLALA…FTSDDMVIVG (134 aa)). One can recognise a Rieske domain in the interval 187-272 (EAAVELSQLR…YEFTSDDMVI (86 aa)). [2Fe-2S] cluster is bound by residues C217, H219, C236, H239, and S241. C222 and C238 are disulfide-bonded.

Belongs to the Rieske iron-sulfur protein family. Component of the ubiquinol-cytochrome c oxidoreductase (cytochrome b-c1 complex, complex III, CIII), a multisubunit enzyme composed of 11 subunits. The complex is composed of 3 respiratory subunits cytochrome b, cytochrome c1 and Rieske protein UQCRFS1, 2 core protein subunits UQCRC1/QCR1 and UQCRC2/QCR2, and 6 low-molecular weight protein subunits UQCRH/QCR6, UQCRB/QCR7, UQCRQ/QCR8, UQCR10/QCR9, UQCR11/QCR10 and subunit 9, the cleavage product of Rieske protein UQCRFS1. The complex exists as an obligatory dimer and forms supercomplexes (SCs) in the inner mitochondrial membrane with NADH-ubiquinone oxidoreductase (complex I, CI) and cytochrome c oxidase (complex IV, CIV), resulting in different assemblies (supercomplex SCI(1)III(2)IV(1) and megacomplex MCI(2)III(2)IV(2)). Incorporation of the Rieske protein UQCRFS1 is the penultimate step in complex III assembly. Interacts with TTC19, which is involved in the clearance of UQCRFS1 fragments. As to quaternary structure, component of the ubiquinol-cytochrome c oxidoreductase (cytochrome b-c1 complex, complex III, CIII). Subunit 9 corresponds to the mitochondrial targeting sequence (MTS) of Rieske protein UQCRFS1. It is retained after processing and incorporated inside complex III, where it remains bound to the complex and localizes between the 2 core subunits UQCRC1/QCR1 and UQCRC2/QCR2. It depends on [2Fe-2S] cluster as a cofactor. Proteolytic processing is necessary for the correct insertion of UQCRFS1 in the complex III dimer. Several fragments are generated during UQCRFS1 insertion, most probably due to the endogenous matrix-processing peptidase (MPP) activity of the 2 core protein subunits UQCRC1/QCR1 and UQCRC2/QCR2, which are homologous to the 2 mitochondrial-processing peptidase (MPP) subunits beta-MPP and alpha-MPP respectively. The action of the protease is also necessary for the clearance of the UQCRFS1 fragments.

Its subcellular location is the mitochondrion inner membrane. The enzyme catalyses a quinol + 2 Fe(III)-[cytochrome c](out) = a quinone + 2 Fe(II)-[cytochrome c](out) + 2 H(+)(out). Functionally, component of the ubiquinol-cytochrome c oxidoreductase, a multisubunit transmembrane complex that is part of the mitochondrial electron transport chain which drives oxidative phosphorylation. The respiratory chain contains 3 multisubunit complexes succinate dehydrogenase (complex II, CII), ubiquinol-cytochrome c oxidoreductase (cytochrome b-c1 complex, complex III, CIII) and cytochrome c oxidase (complex IV, CIV), that cooperate to transfer electrons derived from NADH and succinate to molecular oxygen, creating an electrochemical gradient over the inner membrane that drives transmembrane transport and the ATP synthase. The cytochrome b-c1 complex catalyzes electron transfer from ubiquinol to cytochrome c, linking this redox reaction to translocation of protons across the mitochondrial inner membrane, with protons being carried across the membrane as hydrogens on the quinol. In the process called Q cycle, 2 protons are consumed from the matrix, 4 protons are released into the intermembrane space and 2 electrons are passed to cytochrome c. The Rieske protein is a catalytic core subunit containing a [2Fe-2S] iron-sulfur cluster. It cycles between 2 conformational states during catalysis to transfer electrons from the quinol bound in the Q(0) site in cytochrome b to cytochrome c1. Incorporation of UQCRFS1 is the penultimate step in complex III assembly. Its function is as follows. Component of the ubiquinol-cytochrome c oxidoreductase (cytochrome b-c1 complex, complex III, CIII). UQCRFS1 undergoes proteolytic processing once it is incorporated in the complex III dimer. One of the fragments, called subunit 9, corresponds to its mitochondrial targeting sequence (MTS). The proteolytic processing is necessary for the correct insertion of UQCRFS1 in the complex III dimer, but the persistence of UQCRFS1-derived fragments may prevent newly imported UQCRFS1 to be processed and assembled into complex III and is detrimental for the complex III structure and function. In Pan paniscus (Pygmy chimpanzee), this protein is Cytochrome b-c1 complex subunit Rieske, mitochondrial (UQCRFS1).